A 292-amino-acid chain; its full sequence is uncharacterized protein (292 aa).

Residues 62-81 form a disordered region; sequence ESSSDSDMGFHESQQNQKSN.

This is an uncharacterized protein from Homo sapiens (Human).